We begin with the raw amino-acid sequence, 425 residues long: Synaptotagmin-4 (425 aa).

The Vesicular portion of the chain corresponds to Met-1–Thr-16. A helical transmembrane segment spans residues Val-17–Cys-37. Residues Cys-38–Gly-425 lie on the Cytoplasmic side of the membrane. The segment covering Phe-73–Asn-83 has biased composition (basic and acidic residues). Disordered stretches follow at residues Phe-73 to His-93 and Leu-127 to Ser-147. At Ser-135 the chain carries Phosphoserine; by MAPK8. Residues Ser-135–Thr-146 are compositionally biased toward low complexity. C2 domains lie at Lys-153–Asn-274 and Gly-287–His-420. Ca(2+)-binding residues include Asp-246, Ser-249, and Asp-252.

The protein belongs to the synaptotagmin family. Interacts with KIF1A; the interaction increases in presence of calcium and decreases when SYT4 is phosphorylated at Ser-135. The cofactor is Ca(2+). Phosphorylation at Ser-135 by MAPK8/JNK1 reduces interaction with KIF1A and neuronal dense core vesicles mobility. In terms of tissue distribution, expressed in melanocytes. Expressed in brain. Within brain, expression is highest in hippocampus, with substantial levels also detected in amygdala and thalamus.

It localises to the cytoplasmic vesicle. Its subcellular location is the secretory vesicle. The protein resides in the neuronal dense core vesicle membrane. Functionally, synaptotagmin family member which does not bind Ca(2+). Involved in neuronal dense core vesicles (DCVs) mobility through its interaction with KIF1A. Upon increased neuronal activity, phosphorylation by MAPK8/JNK1 destabilizes the interaction with KIF1A and captures DCVs to synapses. Plays a role in dendrite formation by melanocytes. This Homo sapiens (Human) protein is Synaptotagmin-4 (SYT4).